The chain runs to 999 residues: Ulvan lyase, long isoform (999 aa).

The signal sequence occupies residues M1 to A21. S126–H127 is a substrate binding site. Residue H127 is the Proton donor/acceptor of the active site. Positions 189, 199, and 201 each coordinate Ca(2+). The substrate site is built by Y280 and R297. Ca(2+) contacts are provided by D300, D303, and Y305. Residue Y361 coordinates substrate.

Belongs to the polysaccharide lyase 24 family.

In terms of biological role, ulvan lyase involved in ulvan degradation. Ulvan is the main polysaccharide component of the Ulvales (green seaweed) cell wall. It is composed of disaccharide building blocks comprising 3-sulfated rhamnose (Rha3S) linked to D-glucuronic acid (GlcA), L-iduronic acid (IduA), or D-xylose (Xyl). Ulvan lyase catalyzes preferentially the endolytic cleavage of the glycosidic bond between Rha3S and the uronic acid GlcA, but not IduA, producing oligosaccharides that have unsaturated 4-deoxy-L-threo-hex-4-enopyranosiduronic acid (deltaUA) at the non-reducing end. The most abundant end products in the degradation of the ulvan polysaccharide were deltaUA-Rha3S disaccharides and deltaUA-Rha3S-IduA-Rha3S and deltaUA-Rha3S-Xyl-Rha3S tetrasaccharides. In Alteromonas sp. (strain LOR), this protein is Ulvan lyase, long isoform.